A 569-amino-acid chain; its full sequence is 63 kDa chaperonin, mitochondrial (569 aa).

Residues 1–29 (MFKMYRSPHITRNSFKYLKATNINSCRFY) constitute a mitochondrion transit peptide.

Belongs to the chaperonin (HSP60) family. As to quaternary structure, forms a single seven-member ring complex, in tight association with the p60 protein. As to expression, testis.

Its subcellular location is the mitochondrion. Functionally, implicated in mitochondrial protein import and macromolecular assembly. May facilitate the correct folding of imported proteins. May also prevent misfolding and promote the refolding and proper assembly of unfolded polypeptides generated under stress conditions in the mitochondrial matrix. This Heliothis virescens (Tobacco budworm moth) protein is 63 kDa chaperonin, mitochondrial.